We begin with the raw amino-acid sequence, 160 residues long: Probable chemoreceptor glutamine deamidase CheD 1 (160 aa).

Belongs to the CheD family.

The enzyme catalyses L-glutaminyl-[protein] + H2O = L-glutamyl-[protein] + NH4(+). Functionally, probably deamidates glutamine residues to glutamate on methyl-accepting chemotaxis receptors (MCPs), playing an important role in chemotaxis. The protein is Probable chemoreceptor glutamine deamidase CheD 1 of Syntrophus aciditrophicus (strain SB).